Here is a 293-residue protein sequence, read N- to C-terminus: Probable E3 ubiquitin-protein ligase RNF144A-A (293 aa).

Positions 16–237 (PLVSCKLCLG…YDKGPCRNKL (222 aa)) are TRIAD supradomain. The Zn(2+) site is built by cysteine 20, cysteine 23, cysteine 43, cysteine 46, cysteine 111, cysteine 116, cysteine 135, cysteine 138, cysteine 143, cysteine 146, histidine 151, cysteine 156, cysteine 186, and cysteine 189. The segment at 20 to 70 (CKLCLGEFPLEQMTTITQCQCVFCTMCLKQYVELLIKEGFETAISCPDSAC) adopts an RING-type 1 zinc-finger fold. The IBR-type zinc finger occupies 91 to 156 (QRYRKLQFEK…KASWHPDQDC (66 aa)). Residues 186 to 215 (CPKCKVYIERDEGCAQMMCKNCKHAFCWYC) form an RING-type 2; atypical zinc finger. Cysteine 199 is a catalytic residue. Zn(2+)-binding residues include cysteine 204, cysteine 207, cysteine 212, cysteine 215, histidine 227, and cysteine 233. The chain crosses the membrane as a helical span at residues 251-271 (VVGIFAGFGLLLLVASPFLLL).

It belongs to the RBR family. RNF144 subfamily.

It is found in the membrane. The enzyme catalyses [E2 ubiquitin-conjugating enzyme]-S-ubiquitinyl-L-cysteine + [acceptor protein]-L-lysine = [E2 ubiquitin-conjugating enzyme]-L-cysteine + [acceptor protein]-N(6)-ubiquitinyl-L-lysine.. Its pathway is protein modification; protein ubiquitination. Functionally, E3 ubiquitin-protein ligase which accepts ubiquitin from E2 ubiquitin-conjugating enzymes ube2l3 and ube2l6 in the form of a thioester and then directly transfers the ubiquitin to targeted substrates. This chain is Probable E3 ubiquitin-protein ligase RNF144A-A (rnf144aa), found in Danio rerio (Zebrafish).